A 334-amino-acid chain; its full sequence is Dipeptide transport ATP-binding protein DppF (334 aa).

Residues 13 to 262 (LQAIDLKKHY…PRHPYTQALL (250 aa)) enclose the ABC transporter domain. 55 to 62 (GESGCGKS) provides a ligand contact to ATP.

It belongs to the ABC transporter superfamily. The complex is composed of two ATP-binding proteins (DppD and DppF), two transmembrane proteins (DppB and DppC) and a solute-binding protein (DppA). MppA can replace DppA as binding protein for heme and ALA transport.

It localises to the cell inner membrane. It catalyses the reaction a dipeptide(out) + ATP + H2O = a dipeptide(in) + ADP + phosphate + H(+). Functionally, part of the ABC transporter DppABCDF involved in dipeptide transport. Responsible for energy coupling to the transport system. In terms of biological role, when a foreign outer membrane heme receptor is expressed in E.coli, DppABCDF can also transport heme and its precursor, 5-aminolevulinic acid (ALA), from the periplasm into the cytoplasm. This Escherichia coli (strain K12) protein is Dipeptide transport ATP-binding protein DppF (dppF).